Here is a 79-residue protein sequence, read N- to C-terminus: Ketoisovalerate oxidoreductase subunit VorC (79 aa).

4Fe-4S ferredoxin-type domains lie at 4–33 (AYPV…MSNK) and 40–70 (HYVE…VHIE). 8 residues coordinate [4Fe-4S] cluster: C13, C16, C19, C23, C49, C52, C55, and C59.

Heterotrimer of the VorA, VorB and VorC subunits. It depends on [4Fe-4S] cluster as a cofactor.

It catalyses the reaction 3-methyl-2-oxobutanoate + 2 oxidized [2Fe-2S]-[ferredoxin] + CoA = 2-methylpropanoyl-CoA + 2 reduced [2Fe-2S]-[ferredoxin] + CO2 + H(+). The sequence is that of Ketoisovalerate oxidoreductase subunit VorC (vorC) from Methanothermobacter marburgensis (strain ATCC BAA-927 / DSM 2133 / JCM 14651 / NBRC 100331 / OCM 82 / Marburg) (Methanobacterium thermoautotrophicum).